A 199-amino-acid polypeptide reads, in one-letter code: N-(5'-phosphoribosyl)anthranilate isomerase (199 aa).

This sequence belongs to the TrpF family.

The catalysed reaction is N-(5-phospho-beta-D-ribosyl)anthranilate = 1-(2-carboxyphenylamino)-1-deoxy-D-ribulose 5-phosphate. It functions in the pathway amino-acid biosynthesis; L-tryptophan biosynthesis; L-tryptophan from chorismate: step 3/5. The chain is N-(5'-phosphoribosyl)anthranilate isomerase from Streptococcus pneumoniae (strain Taiwan19F-14).